The sequence spans 333 residues: Phosphoribosylformylglycinamidine cyclo-ligase (333 aa).

This sequence belongs to the AIR synthase family.

The protein resides in the cytoplasm. It carries out the reaction 2-formamido-N(1)-(5-O-phospho-beta-D-ribosyl)acetamidine + ATP = 5-amino-1-(5-phospho-beta-D-ribosyl)imidazole + ADP + phosphate + H(+). The protein operates within purine metabolism; IMP biosynthesis via de novo pathway; 5-amino-1-(5-phospho-D-ribosyl)imidazole from N(2)-formyl-N(1)-(5-phospho-D-ribosyl)glycinamide: step 2/2. The sequence is that of Phosphoribosylformylglycinamidine cyclo-ligase from Methanosarcina acetivorans (strain ATCC 35395 / DSM 2834 / JCM 12185 / C2A).